The following is a 101-amino-acid chain: CRISPR-associated endoribonuclease Cas2 (101 aa).

Position 8 (D8) interacts with Mg(2+).

It belongs to the CRISPR-associated endoribonuclease Cas2 protein family. In terms of assembly, homodimer, forms a heterotetramer with a Cas1 homodimer. Mg(2+) serves as cofactor.

Its function is as follows. CRISPR (clustered regularly interspaced short palindromic repeat), is an adaptive immune system that provides protection against mobile genetic elements (viruses, transposable elements and conjugative plasmids). CRISPR clusters contain sequences complementary to antecedent mobile elements and target invading nucleic acids. CRISPR clusters are transcribed and processed into CRISPR RNA (crRNA). Functions as a ssRNA-specific endoribonuclease. Involved in the integration of spacer DNA into the CRISPR cassette. This Treponema denticola (strain ATCC 35405 / DSM 14222 / CIP 103919 / JCM 8153 / KCTC 15104) protein is CRISPR-associated endoribonuclease Cas2.